We begin with the raw amino-acid sequence, 187 residues long: Auxin-binding protein T85 (187 aa).

Residues 1–20 (MARHVLVVVAVLLFATAEAS) form the signal peptide. Cysteines 22 and 177 form a disulfide. Zn(2+) is bound by residues His-78, His-80, and Glu-84. Asn-117 carries an N-linked (GlcNAc...) asparagine glycan. His-128 provides a ligand contact to Zn(2+). Positions 184-187 (KDEL) match the Prevents secretion from ER motif.

Homodimer.

The protein localises to the endoplasmic reticulum lumen. Its function is as follows. This is probably a receptor for the plant hormone auxin. The chain is Auxin-binding protein T85 (T85) from Nicotiana tabacum (Common tobacco).